Here is a 505-residue protein sequence, read N- to C-terminus: Beta-agarase (505 aa).

Positions 1 to 23 (MLKVIPWLLVTSSLVAIPTYIHA) are cleaved as a signal peptide. Glu200 serves as the catalytic Proton donor. Glu322 (nucleophile) is an active-site residue.

This sequence belongs to the glycosyl hydrolase 86 family.

It is found in the secreted. The enzyme catalyses Hydrolysis of (1-&gt;4)-beta-D-galactosidic linkages in agarose, giving the tetramer as the predominant product.. Its function is as follows. Hydrolase that cleaves agar at the (1-&gt;4) linkage, producing tetrameric saccharide molecules. Is specific for agar and agarose and does not digest alginate or carrageenan. This Pseudoalteromonas atlantica (Alteromonas atlantica) protein is Beta-agarase.